The chain runs to 199 residues: 5'-deoxynucleotidase YfbR (199 aa).

Substrate is bound by residues 18–19 (RW) and His-33. In terms of domain architecture, HD spans 30–142 (VSEHSLQVAM…VKQADALCAY (113 aa)). Residues His-33, His-68, and Asp-69 each contribute to the a divalent metal cation site. Substrate contacts are provided by residues Asp-69, 77-80 (DLPT), and Asp-137. Asp-137 lines the a divalent metal cation pocket.

This sequence belongs to the 5DNU family. Homodimer. A divalent metal cation is required as a cofactor.

Its subcellular location is the cytoplasm. The enzyme catalyses a 2'-deoxyribonucleoside 5'-phosphate + H2O = a 2'-deoxyribonucleoside + phosphate. Functionally, catalyzes the strictly specific dephosphorylation of 2'-deoxyribonucleoside 5'-monophosphates. The sequence is that of 5'-deoxynucleotidase YfbR from Escherichia coli (strain K12 / MC4100 / BW2952).